Consider the following 170-residue polypeptide: Small ribosomal subunit protein bS18c (170 aa).

Disordered regions lie at residues 1–60 (MYTS…GPGD) and 149–170 (NRNL…SSDC). 7 repeats span residues 4–10 (SKQPFLK), 11–17 (SKQPFSK), 18–24 (SEQPFSK), 25–31 (SEQPFRK), 32–38 (SKQTFRK), 39–45 (FKQPFRK), and 46–52 (SKQPFRR). The interval 4–52 (SKQPFLKSKQPFSKSEQPFSKSEQPFRKSKQTFRKFKQPFRKSKQPFRR) is 7 X 7 AA tandem repeats. Positions 13–26 (QPFSKSEQPFSKSE) are enriched in polar residues. Over residues 30 to 55 (RKSKQTFRKFKQPFRKSKQPFRRRPR) the composition is skewed to basic residues.

Belongs to the bacterial ribosomal protein bS18 family. Part of the 30S ribosomal subunit.

It is found in the plastid. It localises to the chloroplast. The chain is Small ribosomal subunit protein bS18c (rps18) from Secale cereale (Rye).